A 166-amino-acid chain; its full sequence is Putative transmembrane protein ORF166 (166 aa).

3 consecutive transmembrane segments (helical) span residues 35–55 (IILV…FAGL), 60–80 (PICV…FVTA), and 124–144 (IFCL…AFIN).

It localises to the host membrane. The protein is Putative transmembrane protein ORF166 of Acidianus convivator (ABV).